The primary structure comprises 85 residues: Cell division topological specificity factor (85 aa).

This sequence belongs to the MinE family.

Its function is as follows. Prevents the cell division inhibition by proteins MinC and MinD at internal division sites while permitting inhibition at polar sites. This ensures cell division at the proper site by restricting the formation of a division septum at the midpoint of the long axis of the cell. The chain is Cell division topological specificity factor from Xanthomonas euvesicatoria pv. vesicatoria (strain 85-10) (Xanthomonas campestris pv. vesicatoria).